We begin with the raw amino-acid sequence, 464 residues long: Glutamate--tRNA ligase (464 aa).

Positions 9-19 (PSPTGYLHIGG) match the 'HIGH' region motif. The 'KMSKS' region signature appears at 242–246 (KISKR). K245 contacts ATP.

It belongs to the class-I aminoacyl-tRNA synthetase family. Glutamate--tRNA ligase type 1 subfamily. Monomer.

It is found in the cytoplasm. It carries out the reaction tRNA(Glu) + L-glutamate + ATP = L-glutamyl-tRNA(Glu) + AMP + diphosphate. Catalyzes the attachment of glutamate to tRNA(Glu) in a two-step reaction: glutamate is first activated by ATP to form Glu-AMP and then transferred to the acceptor end of tRNA(Glu). This Neisseria meningitidis serogroup B (strain ATCC BAA-335 / MC58) protein is Glutamate--tRNA ligase.